A 336-amino-acid polypeptide reads, in one-letter code: tRNA N6-adenosine threonylcarbamoyltransferase (336 aa).

H110 and H114 together coordinate Fe cation. Substrate contacts are provided by residues 133–137 (LVSGK), D166, G179, and N271. D300 is a binding site for Fe cation.

The protein belongs to the KAE1 / TsaD family. Requires Fe(2+) as cofactor.

The protein localises to the cytoplasm. The catalysed reaction is L-threonylcarbamoyladenylate + adenosine(37) in tRNA = N(6)-L-threonylcarbamoyladenosine(37) in tRNA + AMP + H(+). Required for the formation of a threonylcarbamoyl group on adenosine at position 37 (t(6)A37) in tRNAs that read codons beginning with adenine. Is involved in the transfer of the threonylcarbamoyl moiety of threonylcarbamoyl-AMP (TC-AMP) to the N6 group of A37, together with TsaE and TsaB. TsaD likely plays a direct catalytic role in this reaction. The polypeptide is tRNA N6-adenosine threonylcarbamoyltransferase (Buchnera aphidicola subsp. Acyrthosiphon pisum (strain 5A)).